Consider the following 522-residue polypeptide: Glucans biosynthesis protein G (522 aa).

The signal sequence occupies residues 1-33 (MLVNILSKKPRAASVRWLGATVLFTLLTSPAWA).

Belongs to the OpgD/OpgG family.

Its subcellular location is the periplasm. Its pathway is glycan metabolism; osmoregulated periplasmic glucan (OPG) biosynthesis. Involved in the biosynthesis of osmoregulated periplasmic glucans (OPGs). In Serratia proteamaculans (strain 568), this protein is Glucans biosynthesis protein G.